A 132-amino-acid polypeptide reads, in one-letter code: S-protein homolog 15 (132 aa).

An N-terminal signal peptide occupies residues Met1 to Ala20.

The protein belongs to the plant self-incompatibility (S1) protein family.

The protein resides in the secreted. In Arabidopsis thaliana (Mouse-ear cress), this protein is S-protein homolog 15.